The following is a 438-amino-acid chain: Elongation factor 1-alpha (438 aa).

One can recognise a tr-type G domain in the interval 6–229; sequence KPHLNIVIIG…ALDTLEVPPK (224 aa). A G1 region spans residues 15–22; sequence GHVDHGKS. GTP is bound at residue 15 to 22; sequence GHVDHGKS. Ser-22 is a binding site for Mg(2+). A G2 region spans residues 71-75; sequence GVTIS. A G3 region spans residues 92–95; sequence DAPG. GTP is bound by residues 92 to 96 and 154 to 157; these read DAPGH and NKMD. A G4 region spans residues 154-157; sequence NKMD. Positions 195 to 197 are G5; that stretch reads SAW.

It belongs to the TRAFAC class translation factor GTPase superfamily. Classic translation factor GTPase family. EF-Tu/EF-1A subfamily.

Its subcellular location is the cytoplasm. The enzyme catalyses GTP + H2O = GDP + phosphate + H(+). Functionally, GTP hydrolase that promotes the GTP-dependent binding of aminoacyl-tRNA to the A-site of ribosomes during protein biosynthesis. This is Elongation factor 1-alpha from Desulfurococcus mucosus (Desulfurococcus mobilis).